Here is a 247-residue protein sequence, read N- to C-terminus: Uridylate kinase (247 aa).

21–24 contributes to the ATP binding site; that stretch reads KVSG. Gly63 lines the UMP pocket. ATP-binding residues include Gly64 and Arg68. Residues Asp83 and 144–151 contribute to the UMP site; that span reads TGNPFCTT. ATP is bound by residues Thr171, Gln172, Tyr177, and Asp180.

It belongs to the UMP kinase family. As to quaternary structure, homohexamer.

The protein localises to the cytoplasm. The enzyme catalyses UMP + ATP = UDP + ADP. The protein operates within pyrimidine metabolism; CTP biosynthesis via de novo pathway; UDP from UMP (UMPK route): step 1/1. With respect to regulation, inhibited by UTP. Catalyzes the reversible phosphorylation of UMP to UDP. The chain is Uridylate kinase from Rickettsia rickettsii (strain Sheila Smith).